Here is a 206-residue protein sequence, read N- to C-terminus: Large ribosomal subunit protein uL4 (206 aa).

The interval 46–77 (GTRAQKDREQVRHSTKKPFKQKGTGRARAGMT) is disordered. Over residues 58-70 (HSTKKPFKQKGTG) the composition is skewed to basic residues.

It belongs to the universal ribosomal protein uL4 family. As to quaternary structure, part of the 50S ribosomal subunit.

In terms of biological role, one of the primary rRNA binding proteins, this protein initially binds near the 5'-end of the 23S rRNA. It is important during the early stages of 50S assembly. It makes multiple contacts with different domains of the 23S rRNA in the assembled 50S subunit and ribosome. Forms part of the polypeptide exit tunnel. In Polaromonas sp. (strain JS666 / ATCC BAA-500), this protein is Large ribosomal subunit protein uL4.